We begin with the raw amino-acid sequence, 1193 residues long: Probable DNA-directed RNA polymerase II subunit RPB2 homolog (1193 aa).

Asp808 contributes to the Mg(2+) binding site. Cys1137, Cys1140, Cys1155, and Cys1158 together coordinate Zn(2+). The segment at 1137–1158 (CVPCKSYFKVVKTQNGFFCSGC) adopts a C4-type zinc-finger fold.

It belongs to the RNA polymerase beta chain family.

It carries out the reaction RNA(n) + a ribonucleoside 5'-triphosphate = RNA(n+1) + diphosphate. Functionally, component of the DNA-dependent RNA polymerase that catalyzes the transcription of DNA into RNA using the four ribonucleoside triphosphates as substrates. Second largest component of RNA polymerase II which synthesizes mRNA precursors and many functional non-coding RNAs. Proposed to contribute to the polymerase catalytic activity and forms the polymerase active center together with the largest subunit. This Invertebrate iridescent virus 6 (IIV-6) protein is Probable DNA-directed RNA polymerase II subunit RPB2 homolog.